The chain runs to 449 residues: Myb-related protein Pp1 (449 aa).

In terms of domain architecture, HTH myb-type spans 1–30; that stretch reads LGNRWSAIAIPRRTDNEIKNYWNTHLKKRL. A DNA-binding region (H-T-H motif) is located at residues 5–26; that stretch reads WSAIAIPRRTDNEIKNYWNTHL.

The protein resides in the nucleus. In terms of biological role, possible transcription activator. The chain is Myb-related protein Pp1 (PP1) from Physcomitrium patens (Spreading-leaved earth moss).